The sequence spans 182 residues: NADH-quinone oxidoreductase subunit B 1 (182 aa).

[4Fe-4S] cluster is bound by residues Cys-47, Cys-48, Cys-113, and Cys-142.

It belongs to the complex I 20 kDa subunit family. In terms of assembly, NDH-1 is composed of 14 different subunits. Subunits NuoB, C, D, E, F, and G constitute the peripheral sector of the complex. The cofactor is [4Fe-4S] cluster.

The protein resides in the cell inner membrane. It catalyses the reaction a quinone + NADH + 5 H(+)(in) = a quinol + NAD(+) + 4 H(+)(out). NDH-1 shuttles electrons from NADH, via FMN and iron-sulfur (Fe-S) centers, to quinones in the respiratory chain. Couples the redox reaction to proton translocation (for every two electrons transferred, four hydrogen ions are translocated across the cytoplasmic membrane), and thus conserves the redox energy in a proton gradient. The sequence is that of NADH-quinone oxidoreductase subunit B 1 from Anaeromyxobacter dehalogenans (strain 2CP-C).